A 1120-amino-acid chain; its full sequence is Transcription-repair-coupling factor (1120 aa).

In terms of domain architecture, Helicase ATP-binding spans 591 to 756 (DLSNGMLMDR…MTGLKELSII (166 aa)). Residue 604–611 (GDVGFGKT) coordinates ATP. The short motif at 709–712 (DEEQ) is the DEEQ box element. The 155-residue stretch at 777-931 (IIRDALLHEH…GFTIASHDMD (155 aa)) folds into the Helicase C-terminal domain.

This sequence in the N-terminal section; belongs to the UvrB family. The protein in the C-terminal section; belongs to the helicase family. RecG subfamily.

The protein localises to the cytoplasm. In terms of biological role, couples transcription and DNA repair by recognizing RNA polymerase (RNAP) stalled at DNA lesions. Mediates ATP-dependent release of RNAP and its truncated transcript from the DNA, and recruitment of nucleotide excision repair machinery to the damaged site. This is Transcription-repair-coupling factor from Rickettsia bellii (strain RML369-C).